Here is a 388-residue protein sequence, read N- to C-terminus: Glucose-1-phosphate adenylyltransferase (388 aa).

Alpha-D-glucose 1-phosphate-binding positions include Y100, G165, 180-181, and S191; that span reads EK.

This sequence belongs to the bacterial/plant glucose-1-phosphate adenylyltransferase family. In terms of assembly, homotetramer.

It catalyses the reaction alpha-D-glucose 1-phosphate + ATP + H(+) = ADP-alpha-D-glucose + diphosphate. It participates in glycan biosynthesis; glycogen biosynthesis. Functionally, involved in the biosynthesis of ADP-glucose, a building block required for the elongation reactions to produce glycogen. Catalyzes the reaction between ATP and alpha-D-glucose 1-phosphate (G1P) to produce pyrophosphate and ADP-Glc. This Clostridium perfringens (strain SM101 / Type A) protein is Glucose-1-phosphate adenylyltransferase.